The sequence spans 151 residues: Nucleoside diphosphate kinase (151 aa).

Residues Lys-11, Phe-59, Arg-87, Thr-93, Arg-104, and Asn-114 each coordinate ATP. The Pros-phosphohistidine intermediate role is filled by His-117.

The protein belongs to the NDK family. Homohexamer. It depends on Mg(2+) as a cofactor.

It catalyses the reaction a 2'-deoxyribonucleoside 5'-diphosphate + ATP = a 2'-deoxyribonucleoside 5'-triphosphate + ADP. It carries out the reaction a ribonucleoside 5'-diphosphate + ATP = a ribonucleoside 5'-triphosphate + ADP. In terms of biological role, major role in the synthesis of nucleoside triphosphates other than ATP. The ATP gamma phosphate is transferred to the NDP beta phosphate via a ping-pong mechanism, using a phosphorylated active-site intermediate. This Ginglymostoma cirratum (Nurse shark) protein is Nucleoside diphosphate kinase.